Here is a 224-residue protein sequence, read N- to C-terminus: Putative cobalt transport protein CbiM (224 aa).

Helical transmembrane passes span 8-28 (LPPL…VYGI), 41-61 (AMPM…LKMP), 75-95 (FGAV…VLVF), 108-128 (LGAN…AVWL), 138-158 (EIAM…VTAI), and 169-189 (FFTA…PLAI).

Belongs to the CbiM family. As to quaternary structure, forms an energy-coupling factor (ECF) transporter complex composed of an ATP-binding protein (A component, CbiO), a transmembrane protein (T component, CbiQ) and 2 possible substrate-capture proteins (S components, CbiM and CbiN) of unknown stoichimetry.

The protein localises to the cell membrane. The protein operates within cofactor biosynthesis; adenosylcobalamin biosynthesis. In terms of biological role, part of the energy-coupling factor (ECF) transporter complex CbiMNOQ involved in cobalt import. In Methanosphaera stadtmanae (strain ATCC 43021 / DSM 3091 / JCM 11832 / MCB-3), this protein is Putative cobalt transport protein CbiM.